The following is a 255-amino-acid chain: Small ribosomal subunit protein eS1A (255 aa).

The span at 1–18 (MAVGKNKRLSKGKKGQKK) shows a compositional bias: basic residues. Residues 1-20 (MAVGKNKRLSKGKKGQKKRV) form a disordered region. Alanine 2 carries the post-translational modification N-acetylalanine; partial. Threonine 245 bears the Phosphothreonine mark. A Glycyl lysine isopeptide (Lys-Gly) (interchain with G-Cter in ubiquitin) cross-link involves residue lysine 248. Threonine 254 carries the post-translational modification Phosphothreonine.

It belongs to the eukaryotic ribosomal protein eS1 family. Component of the small ribosomal subunit. Mature ribosomes consist of a small (40S) and a large (60S) subunit. The 40S subunit contains about 33 different proteins and 1 molecule of RNA (18S). The 60S subunit contains about 49 different proteins and 3 molecules of RNA (25S, 5.8S and 5S).

The protein resides in the cytoplasm. This is Small ribosomal subunit protein eS1A from Saccharomyces cerevisiae (strain RM11-1a) (Baker's yeast).